The sequence spans 619 residues: Alpha-(1,6)-fucosyltransferase (619 aa).

Residues 1–17 (MLLVRQLFGASANSWAR) are Cytoplasmic-facing. A helical; Signal-anchor for type II membrane protein membrane pass occupies residues 18–38 (ALIIFVLAWIGLVYVFVVKLT). The Lumenal portion of the chain corresponds to 39–619 (NTQGQQAAGE…TAKLPLYAGI (581 aa)). Cystine bridges form between Cys253–Cys315, Cys261–Cys279, and Cys267–Cys271. Residues 255–539 (NARKLVCKLN…PDAAHRFKSL (285 aa)) form the GT23 domain. An SH3-binding motif is present at residues 345 to 351 (PRPPYLP). The tract at residues 411–412 (RR) is important for donor substrate binding. A disulfide bridge links Cys511 with Cys518. An SH3 domain is found at 548-609 (QNAHNRRVVI…PSFKVEEKVD (62 aa)).

This sequence belongs to the glycosyltransferase 23 family. Mn(2+) serves as cofactor. Mg(2+) is required as a cofactor.

It localises to the golgi apparatus. The protein localises to the golgi stack membrane. The catalysed reaction is N(4)-{beta-D-GlcNAc-(1-&gt;2)-alpha-D-Man-(1-&gt;3)-[beta-D-GlcNAc-(1-&gt;2)-alpha-D-Man-(1-&gt;6)]-beta-D-Man-(1-&gt;4)-beta-D-GlcNAc-(1-&gt;4)-beta-D-GlcNAc}-L-asparaginyl-[protein] + GDP-beta-L-fucose = an N(4)-{beta-D-GlcNAc-(1-&gt;2)-alpha-D-Man-(1-&gt;3)-[beta-D-GlcNAc-(1-&gt;2)-alpha-D-Man-(1-&gt;6)]-beta-D-Man-(1-&gt;4)-beta-D-GlcNAc-(1-&gt;4)-[alpha-L-Fuc-(1-&gt;6)]-beta-D-GlcNAc}-L-asparaginyl-[protein] + GDP + H(+). The protein operates within protein modification; protein glycosylation. Functionally, catalyzes the addition of fucose in alpha 1-6 linkage to the first GlcNAc residue, next to the peptide chains in N-glycans. The addition is prevented if the GlcNAc residue is already fucosylated. In Drosophila melanogaster (Fruit fly), this protein is Alpha-(1,6)-fucosyltransferase (FucT6).